A 297-amino-acid polypeptide reads, in one-letter code: uncharacterized protein (297 aa).

The next 2 helical transmembrane spans lie at 17-37 and 48-68; these read LALS…KEIF and TISG…GYSI. The PNPLA domain occupies 17-196; the sequence is LALSGGGFYG…TLNYPITLFD (180 aa). Residues 21 to 26 carry the GXGXXG motif; the sequence is GGGFYG. The GXSXG signature appears at 51 to 55; the sequence is GVSVG. Serine 53 serves as the catalytic Nucleophile. Residue asparagine 122 is glycosylated (N-linked (GlcNAc...) asparagine; by host). Residue aspartate 183 is the Proton acceptor of the active site. The DGA/G motif lies at 183-185; it reads DGG. N-linked (GlcNAc...) asparagine; by host glycosylation occurs at asparagine 239.

The protein localises to the membrane. In terms of biological role, probable lipid hydrolase. This is an uncharacterized protein from Acanthamoeba polyphaga mimivirus (APMV).